The sequence spans 65 residues: Small ribosomal subunit protein bS21 (65 aa).

Belongs to the bacterial ribosomal protein bS21 family.

This Geobacter sp. (strain M21) protein is Small ribosomal subunit protein bS21.